We begin with the raw amino-acid sequence, 191 residues long: FMN reductase (NADPH) (191 aa).

This sequence belongs to the SsuE family. As to quaternary structure, homodimer.

The catalysed reaction is FMNH2 + NADP(+) = FMN + NADPH + 2 H(+). Functionally, catalyzes an NADPH-dependent reduction of FMN, but is also able to reduce FAD or riboflavin. This is FMN reductase (NADPH) (ssuE) from Escherichia coli (strain K12).